Consider the following 372-residue polypeptide: Coxsackievirus and adenovirus receptor homolog (372 aa).

Positions 1-22 (MDMRTSFLCVTYVILLTGSACG) are cleaved as a signal peptide. 2 consecutive Ig-like C2-type domains span residues 23 to 140 (LQIT…YLLT) and 130 to 234 (PGIA…VTIT). At 23–241 (LQITSTGQTS…TITQPPNTAG (219 aa)) the chain is on the extracellular side. 3 cysteine pairs are disulfide-bonded: C45-C124, C150-C227, and C166-C216. N-linked (GlcNAc...) asparagine glycosylation occurs at N205. Residues 242 to 262 (IIAGVIICILLLLILLALILF) form a helical membrane-spanning segment. The Cytoplasmic portion of the chain corresponds to 263–372 (CCCRARHKKK…PAQNKDGSIV (110 aa)). The tract at residues 286 to 352 (PPPKSRVSTA…PPSRMAGPNL (67 aa)) is disordered. The segment covering 291 to 317 (RVSTARSFTSVGSQRSSLGSMSPSNLH) has biased composition (polar residues). Positions 318-336 (EYSKPQYDKIPSEEYDRPP) are enriched in basic and acidic residues.

As to quaternary structure, monomer. Probably homodimer formed by 2 molecules on adjacent cells.

It localises to the cell membrane. Its subcellular location is the basolateral cell membrane. The protein localises to the cell junction. It is found in the tight junction. The protein resides in the adherens junction. In terms of biological role, may function as a homophilic cell adhesion molecule and be essential for tight junction integrity. May also be involved in transepithelial migration of leukocytes through adhesive interactions with jaml. The interaction between both receptors may also mediate the activation of gamma-delta T-cells, a subpopulation of T-cells residing in epithelia and involved in tissue homeostasis and repair. This Danio rerio (Zebrafish) protein is Coxsackievirus and adenovirus receptor homolog (cxadr).